A 1112-amino-acid chain; its full sequence is Glutamate receptor-interacting protein 1 (1112 aa).

At Ser-43 the chain carries Phosphoserine. 6 PDZ domains span residues 53–136, 150–238, 252–336, 471–560, 572–657, and 672–754; these read VVEL…EYEL, TVEV…EYDV, LVEV…LPHH, EVVL…EFDV, HVKL…RKDE, and TVEL…KKQT. Disordered stretches follow at residues 752–796, 841–886, and 922–963; these read KQTD…VYPS, KRAS…AEQE, and NHEA…DVGR. A compositionally biased stretch (low complexity) spans 869–880; sequence STASGFAGASDS. Residues 928-958 show a composition bias toward polar residues; it reads ARSQLGRQASFQERSNSRPHYSQTTRSNTLP. The PDZ 7 domain occupies 988 to 1070; the sequence is KVTLYKDSGM…KLDLVISRNP (83 aa). The disordered stretch occupies residues 1077–1112; the sequence is IEQPALPSDWSEQNSAFFQQPSHGGNLETREPTNTL. Residues 1086 to 1099 show a composition bias toward polar residues; the sequence is WSEQNSAFFQQPSH.

In terms of assembly, interacts with EFNB1, EPHA7, EPHB2, EFNB3, KIF5A, KIF5C, KIF5B and the C-terminal tail of PRLHR. Forms a ternary complex with GRIA2 and CSPG4. Can form homomultimers or heteromultimers with GRIP2. Interacts with GRIA2, GRIA3, GRIPAP1/GRASP1, PPFIA1, PPFIA4, FRAS1, PLCD4, PTPRF and liprins-alpha. Interacts with ATAD1 in an ATP-dependent manner. ATAD1-catalyzed ATP hydrolysis disrupts binding to ATAD1 and to GRIA2 and leads to AMPAR complex disassembly. Interacts with SLC30A9. Interacts with BUD23. Forms a complex with NSG1, GRIA2 and STX12; controls the intracellular fate of AMPAR and the endosomal sorting of the GRIA2 subunit toward recycling and membrane targeting. Interacts with NSG1. Expressed in brain, testis and retina. In brain highly expressed in the olfactory bulb, cortex and hippocampus and lower level in thalamus, cerebellum and spinal cord. In brain it is found in the perikaryon, dendrites, dendritic shafts, dendritic spines and, excitatory and inhibitory synapses of neurons. In retina, it is most abundant in the plexiform layers than in perikarya.

The protein resides in the cytoplasmic vesicle. It is found in the perikaryon. It localises to the cell projection. The protein localises to the dendrite. Its subcellular location is the cytoplasm. The protein resides in the endomembrane system. It is found in the postsynaptic cell membrane. It localises to the postsynaptic density. The protein localises to the endoplasmic reticulum membrane. Its function is as follows. May play a role as a localized scaffold for the assembly of a multiprotein signaling complex and as mediator of the trafficking of its binding partners at specific subcellular location in neurons. Through complex formation with NSG1, GRIA2 and STX12 controls the intracellular fate of AMPAR and the endosomal sorting of the GRIA2 subunit toward recycling and membrane targeting. The protein is Glutamate receptor-interacting protein 1 (Grip1) of Rattus norvegicus (Rat).